A 567-amino-acid chain; its full sequence is Inactive protein kinase SELMODRAFT_444075 (567 aa).

A disordered region spans residues 148–206 (NETRRKGPSPSEVLNSTTSSPASHKPQVLNDFLRMKESREYTEETDTQRNVSRPVDRVS). Positions 159–169 (EVLNSTTSSPA) are enriched in polar residues. Over residues 180–189 (LRMKESREYT) the composition is skewed to basic and acidic residues. Positions 196-206 (RNVSRPVDRVS) are enriched in low complexity. Residues 255–487 (FSDVNFLAEG…EGDSLSDTSL (233 aa)) enclose the Protein kinase domain. ATP contacts are provided by residues 261-269 (LAEGGYGSV) and Lys-283. A compositionally biased stretch (low complexity) spans 511-538 (DSSSSRSSSASSVLKSFSRTQHSSRSSS). Residues 511–567 (DSSSSRSSSASSVLKSFSRTQHSSRSSSNAGSPLNPAATQALAFKKYNKNTTRHTQD) are disordered. Basic residues predominate over residues 556 to 567 (KYNKNTTRHTQD).

This chain is Inactive protein kinase SELMODRAFT_444075, found in Selaginella moellendorffii (Spikemoss).